Reading from the N-terminus, the 289-residue chain is Beta-lactamase Toho-2 (289 aa).

The N-terminal stretch at M1–A28 is a signal peptide. S73 serves as the catalytic Acyl-ester intermediate. Residue K235–G237 coordinates substrate.

Belongs to the class-A beta-lactamase family.

It carries out the reaction a beta-lactam + H2O = a substituted beta-amino acid. With respect to regulation, inhibited 16-fold better by the beta-lactamase inhibitor tazobactam than by clavulanic acid. Hydrolyzes beta-lactam antibiotics such as penicillin G, carbenicillin, cephaloridine, cefoxitin, cefotaxime, ceftazidime, and aztreonam. Has especially increased relative hydrolysis rates for cephalothin, cephaloridine, cefotaxime and ceftizoxime. The polypeptide is Beta-lactamase Toho-2 (bla) (Escherichia coli).